Reading from the N-terminus, the 790-residue chain is Nuclear cap-binding protein subunit 1 (790 aa).

A disordered region spans residues 1–26 (MSRRRHSYENDGGQPHKRRKTSDANE). Residues 3–20 (RRRHSYENDGGQPHKRRK) carry the Nuclear localization signal motif. Residue Ser7 is modified to Phosphoserine. A Phosphothreonine modification is found at Thr21. 2 positions are modified to phosphoserine: Ser22 and Ser201. In terms of domain architecture, MIF4G spans 28–240 (EDHLESLICK…CLWAQIQKLK (213 aa)). Lys204 bears the N6-acetyllysine mark. The stretch at 643 to 713 (STIRKMNKHV…SEQKNLFLVI (71 aa)) forms a coiled coil. Positions 666–685 (LARQHKRRSDDDDRSSDRKD) are disordered. Lys684 participates in a covalent cross-link: Glycyl lysine isopeptide (Lys-Gly) (interchain with G-Cter in SUMO2). An N6-acetyllysine modification is found at Lys698.

The protein belongs to the NCBP1 family. Component of the nuclear cap-binding complex (CBC), a heterodimer composed of NCBP1/CBP80 and NCBP2/CBP20 that interacts with m7GpppG-capped RNA. Found in a U snRNA export complex containing PHAX/RNUXA, NCBP1/CBP80, NCBP2/CBP20, RAN, XPO1 and m7G-capped RNA. Identified in a IGF2BP1-dependent mRNP granule complex containing untranslated mRNAs. Interacts with PHAX/RNUXA, SRRT/ARS2, EIF4G2, IGF2BP1, HNRNPF, HNRNPH1, KIAA0427/CTIF, PARN, DROSHA, UPF1 and ALYREF/THOC4. May interact with EIF4G1; the interaction is however controversial. The large PER complex involved in the repression of transcriptional termination is composed of at least PER2, CDK9, DDX5, DHX9, NCBP1/CBP80 and POLR2A (active). Component of an alternative nuclear cap-binding complex (CBC) composed of NCBP1/CBP80 and NCBP3. Interacts with METTL3. Interacts with ZFC3H1 in a RNase-insensitive manner. Interacts with MTREX. Interacts with TASOR. Interacts with DHX34; the interaction is RNA-dependent. Interacts with KPNA3. Dephosphorylated at Thr-21 by the PNUTS-PP1 complex during RNA polymerase II transcription pause-release. As to expression, expressed in the spermatogonia, spermatocytes and granular cells within the cerebellum.

Its subcellular location is the nucleus. It localises to the cytoplasm. Its function is as follows. Component of the cap-binding complex (CBC), which binds cotranscriptionally to the 5'-cap of pre-mRNAs and is involved in various processes such as pre-mRNA splicing, translation regulation, nonsense-mediated mRNA decay, RNA-mediated gene silencing (RNAi) by microRNAs (miRNAs) and mRNA export. The CBC complex is involved in mRNA export from the nucleus via its interaction with ALYREF/THOC4/ALY, leading to the recruitment of the mRNA export machinery to the 5'-end of mRNA and to mRNA export in a 5' to 3' direction through the nuclear pore. The CBC complex is also involved in mediating U snRNA and intronless mRNAs export from the nucleus. The CBC complex is essential for a pioneer round of mRNA translation, before steady state translation when the CBC complex is replaced by cytoplasmic cap-binding protein eIF4E. The pioneer round of mRNA translation mediated by the CBC complex plays a central role in nonsense-mediated mRNA decay (NMD), NMD only taking place in mRNAs bound to the CBC complex, but not on eIF4E-bound mRNAs. The CBC complex enhances NMD in mRNAs containing at least one exon-junction complex (EJC) via its interaction with UPF1, promoting the interaction between UPF1 and UPF2. The CBC complex is also involved in 'failsafe' NMD, which is independent of the EJC complex, while it does not participate in Staufen-mediated mRNA decay (SMD). During cell proliferation, the CBC complex is also involved in microRNAs (miRNAs) biogenesis via its interaction with SRRT/ARS2 and is required for miRNA-mediated RNA interference. The CBC complex also acts as a negative regulator of PARN, thereby acting as an inhibitor of mRNA deadenylation. In the CBC complex, NCBP1/CBP80 does not bind directly capped RNAs (m7GpppG-capped RNA) but is required to stabilize the movement of the N-terminal loop of NCBP2/CBP20 and lock the CBC into a high affinity cap-binding state with the cap structure. Associates with NCBP3 to form an alternative cap-binding complex (CBC) which plays a key role in mRNA export and is particularly important in cellular stress situations such as virus infections. The conventional CBC with NCBP2 binds both small nuclear RNA (snRNA) and messenger (mRNA) and is involved in their export from the nucleus whereas the alternative CBC with NCBP3 does not bind snRNA and associates only with mRNA thereby playing a role only in mRNA export. NCBP1/CBP80 is required for cell growth and viability. This Mus musculus (Mouse) protein is Nuclear cap-binding protein subunit 1 (Ncbp1).